We begin with the raw amino-acid sequence, 126 residues long: Fluoride-specific ion channel FluC (126 aa).

Transmembrane regions (helical) follow at residues methionine 1 to aspartate 21, leucine 40 to alanine 60, alanine 72 to valine 92, and methionine 104 to leucine 124. 2 residues coordinate Na(+): glycine 79 and threonine 82.

Belongs to the fluoride channel Fluc/FEX (TC 1.A.43) family.

Its subcellular location is the cell membrane. The catalysed reaction is fluoride(in) = fluoride(out). Its activity is regulated as follows. Na(+) is not transported, but it plays an essential structural role and its presence is essential for fluoride channel function. Fluoride-specific ion channel. Important for reducing fluoride concentration in the cell, thus reducing its toxicity. In Renibacterium salmoninarum (strain ATCC 33209 / DSM 20767 / JCM 11484 / NBRC 15589 / NCIMB 2235), this protein is Fluoride-specific ion channel FluC.